A 211-amino-acid chain; its full sequence is Ribosomal RNA small subunit methyltransferase G (211 aa).

Residues Gly74, Leu79, 125 to 126 (AE), and Arg140 each bind S-adenosyl-L-methionine.

The protein belongs to the methyltransferase superfamily. RNA methyltransferase RsmG family.

The protein localises to the cytoplasm. Its function is as follows. Specifically methylates the N7 position of guanine in position 518 of 16S rRNA. This chain is Ribosomal RNA small subunit methyltransferase G, found in Clavibacter michiganensis subsp. michiganensis (strain NCPPB 382).